Here is a 307-residue protein sequence, read N- to C-terminus: Elongation factor Ts (307 aa).

Residues 80-83 (TDFV) are involved in Mg(2+) ion dislocation from EF-Tu.

The protein belongs to the EF-Ts family.

Its subcellular location is the cytoplasm. Associates with the EF-Tu.GDP complex and induces the exchange of GDP to GTP. It remains bound to the aminoacyl-tRNA.EF-Tu.GTP complex up to the GTP hydrolysis stage on the ribosome. The polypeptide is Elongation factor Ts (Azorhizobium caulinodans (strain ATCC 43989 / DSM 5975 / JCM 20966 / LMG 6465 / NBRC 14845 / NCIMB 13405 / ORS 571)).